A 363-amino-acid chain; its full sequence is Spermidine/putrescine import ATP-binding protein PotA (363 aa).

Positions 4–234 (LELRNVIRRF…PANRFIADFI (231 aa)) constitute an ABC transporter domain. 36–43 (GPSGCGKT) provides a ligand contact to ATP.

Belongs to the ABC transporter superfamily. Spermidine/putrescine importer (TC 3.A.1.11.1) family. As to quaternary structure, the complex is composed of two ATP-binding proteins (PotA), two transmembrane proteins (PotB and PotC) and a solute-binding protein (PotD).

It is found in the cell inner membrane. It catalyses the reaction ATP + H2O + polyamine-[polyamine-binding protein]Side 1 = ADP + phosphate + polyamineSide 2 + [polyamine-binding protein]Side 1.. Part of the ABC transporter complex PotABCD involved in spermidine/putrescine import. Responsible for energy coupling to the transport system. This is Spermidine/putrescine import ATP-binding protein PotA from Nitrosomonas eutropha (strain DSM 101675 / C91 / Nm57).